Consider the following 428-residue polypeptide: Protein Wnt-8b (428 aa).

A signal peptide spans 1–22; that stretch reads MFYTGSFWFIFFILPAIPFCHS. A disulfide bridge links C54 with C65. 2 N-linked (GlcNAc...) asparagine glycosylation sites follow: N123 and N176. Intrachain disulfides connect C177/C185, C187/C205, C253/C267, C255/C262, C329/C367, C345/C360, C364/C406, C382/C397, C384/C394, and C389/C390. S259 carries the O-palmitoleoyl serine lipid modification. An N-linked (GlcNAc...) asparagine glycan is attached at N332.

Belongs to the Wnt family. Palmitoleoylation is required for efficient binding to frizzled receptors. Depalmitoleoylation leads to Wnt signaling pathway inhibition. In terms of processing, proteolytic processing by tiki1 and tiki2 promotes oxidation and formation of large disulfide-bond oligomers, leading to inactivation of wnt8b. In adults, in brain.

Its subcellular location is the secreted. The protein localises to the extracellular space. It is found in the extracellular matrix. Its function is as follows. Ligand for members of the frizzled family of seven transmembrane receptors. Plays a role in the initiation of dorsal axis development. May activate a Nieuwkoop center-like signaling pathway. This chain is Protein Wnt-8b (wnt8b), found in Xenopus laevis (African clawed frog).